Reading from the N-terminus, the 118-residue chain is Protein RALF-like 24 (118 aa).

The first 22 residues, 1-22 (MSRSLALVYLSLLCLQTHLSIS), serve as a signal peptide directing secretion. The propeptide at 23–63 (VTVPIPSVNGEIDAMLNRNGVIGEEEGEEMMPSEISRRVMM) is removed in mature form. Intrachain disulfides connect Cys81/Cys91 and Cys103/Cys109.

The protein belongs to the plant rapid alkalinization factor (RALF) family. In terms of processing, proteolytically cleaved, probably by S1P, a subtilisin-like serine protease (subtilase).

The protein resides in the secreted. In terms of biological role, cell signaling peptide that may regulate plant stress, growth, and development. Mediates a rapid alkalinization of extracellular space by mediating a transient increase in the cytoplasmic Ca(2+) concentration leading to a calcium-dependent signaling events through a cell surface receptor and a concomitant activation of some intracellular mitogen-activated protein kinases. This Arabidopsis thaliana (Mouse-ear cress) protein is Protein RALF-like 24 (RALFL24).